Reading from the N-terminus, the 750-residue chain is Catalase-peroxidase (750 aa).

Residues 112 to 235 (WHSAGTYRIG…LGAAHMGLIY (124 aa)) constitute a cross-link (tryptophyl-tyrosyl-methioninium (Trp-Tyr) (with M-261)). H113 functions as the Proton acceptor in the catalytic mechanism. Positions 235 to 261 (YVNPEGHNGNPDPVEAASYIRETFGRM) form a cross-link, tryptophyl-tyrosyl-methioninium (Tyr-Met) (with W-112). Position 276 (H276) interacts with heme b.

Belongs to the peroxidase family. Peroxidase/catalase subfamily. Homodimer or homotetramer. Heme b serves as cofactor. In terms of processing, formation of the three residue Trp-Tyr-Met cross-link is important for the catalase, but not the peroxidase activity of the enzyme.

It carries out the reaction H2O2 + AH2 = A + 2 H2O. The enzyme catalyses 2 H2O2 = O2 + 2 H2O. In terms of biological role, bifunctional enzyme with both catalase and broad-spectrum peroxidase activity. This chain is Catalase-peroxidase, found in Christiangramia forsetii (strain DSM 17595 / CGMCC 1.15422 / KT0803) (Gramella forsetii).